A 663-amino-acid polypeptide reads, in one-letter code: DNA topoisomerase 4 subunit B (663 aa).

Residues Tyr-7, Asn-47, Asp-74, 114–120 (GLHGVGA), and Lys-341 contribute to the ATP site. The disordered stretch occupies residues 386-418 (REAARKAREDARSGKKNKRKDTLLSGKLTPAQS). A compositionally biased stretch (basic and acidic residues) spans 387–398 (EAARKAREDARS). Residues 424–538 (NELYLVEGDS…AGRVFIALPP (115 aa)) enclose the Toprim domain. Mg(2+)-binding residues include Glu-430, Asp-503, and Asp-505.

The protein belongs to the type II topoisomerase family. ParE type 2 subfamily. In terms of assembly, heterotetramer composed of ParC and ParE. Mg(2+) serves as cofactor. Mn(2+) is required as a cofactor. The cofactor is Ca(2+).

The enzyme catalyses ATP-dependent breakage, passage and rejoining of double-stranded DNA.. Functionally, topoisomerase IV is essential for chromosome segregation. It relaxes supercoiled DNA. Performs the decatenation events required during the replication of a circular DNA molecule. The polypeptide is DNA topoisomerase 4 subunit B (Staphylococcus aureus (strain MRSA252)).